We begin with the raw amino-acid sequence, 532 residues long: Pre-rRNA-processing protein pro-1 (532 aa).

WD repeat units follow at residues A136–R175 and G287–V326. The segment at T435–Q464 is disordered. The stretch at E445 to A526 forms a coiled coil. The segment covering R451–Q464 has biased composition (basic residues).

Belongs to the WD repeat IPI3/WDR18 family. Component of the PELP1 complex, composed of at least PELP1, TEX10 and WDR18. The complex interacts with pre-60S ribosome particles.

It localises to the nucleus. Its subcellular location is the nucleolus. The protein localises to the nucleoplasm. Functionally, component of the PELP1 complex involved in the nucleolar steps of 28S rRNA maturation and the subsequent nucleoplasmic transit of the pre-60S ribosomal subunit. Required for processing ITS2 sequences from rRNA intermediates during 26S rRNA maturation. Required in the soma to promote normal proliferation and prevent germline tumor formation. The protein is Pre-rRNA-processing protein pro-1 (pro-1) of Caenorhabditis briggsae.